We begin with the raw amino-acid sequence, 635 residues long: Biosynthetic arginine decarboxylase (635 aa).

Position 100 is an N6-(pyridoxal phosphate)lysine (Lys-100). 282-292 (IDIGGGLGVDY) is a binding site for substrate.

The protein belongs to the Orn/Lys/Arg decarboxylase class-II family. SpeA subfamily. Mg(2+) is required as a cofactor. Requires pyridoxal 5'-phosphate as cofactor.

It carries out the reaction L-arginine + H(+) = agmatine + CO2. It participates in amine and polyamine biosynthesis; agmatine biosynthesis; agmatine from L-arginine: step 1/1. Functionally, catalyzes the biosynthesis of agmatine from arginine. The chain is Biosynthetic arginine decarboxylase from Pelobacter propionicus (strain DSM 2379 / NBRC 103807 / OttBd1).